Here is a 235-residue protein sequence, read N- to C-terminus: Claudin-16 (235 aa).

Over 1–3 (MKD) the chain is Cytoplasmic. The chain crosses the membrane as a helical span at residues 4 to 24 (LLQYAACFLAIFSTGFLIVAT). Residues 25–79 (RTDCWMVNADDSLEVSTKCRGLWWECVTNAFDGIRTCDEYDSIYAEHPLKLVVTR) are Extracellular-facing. The chain crosses the membrane as a helical span at residues 80 to 100 (ALMITADILAGFGFITLLLGL). The Cytoplasmic segment spans residues 101–115 (DCVKFLPDEPHIKVR). The chain crosses the membrane as a helical span at residues 116-136 (LCFVAGTVLLIAGTPGIIGSV). The Extracellular portion of the chain corresponds to 137 to 169 (WYAVDVYVERSSLVLHNIFLGIQYKFGWSCWLG). The chain crosses the membrane as a helical span at residues 170 to 190 (MAGSLGCFLAGALLTCCLYLF). Residues 191 to 235 (KDVGPERNYPYAMRKPYSTAGVSMAKSYKAPRTETAKMYAVDTRV) are Cytoplasmic-facing. The Interaction with TJP1 motif lies at 233–235 (TRV).

This sequence belongs to the claudin family. In terms of assembly, can form heteropolymeric tight junction strands with other claudins. Interacts with CLDN19. Interacts (via PDZ-binding motif TRV) with TJP1 (via PDZ domain). Cannot form tight junction strands on its own.

The protein resides in the cell junction. The protein localises to the tight junction. Its subcellular location is the cell membrane. The enzyme catalyses Mg(2+)(in) = Mg(2+)(out). The catalysed reaction is Ca(2+)(in) = Ca(2+)(out). It catalyses the reaction Na(+)(in) = Na(+)(out). It carries out the reaction K(+)(in) = K(+)(out). The enzyme catalyses Rb(+)(in) = Rb(+)(out). The catalysed reaction is Cs(+)(in) = Cs(+)(out). It catalyses the reaction Li(+)(in) = Li(+)(out). Forms paracellular channels: coassembles with CLDN19 into tight junction strands with cation-selective channels through the strands, conveying epithelial permeability in a process known as paracellular tight junction permeability. Involved in the maintenance of ion gradients along the nephron. In the thick ascending limb (TAL) of Henle's loop, facilitates sodium paracellular permeability from the interstitial compartment to the lumen, contributing to the lumen-positive transepithelial potential that drives paracellular magnesium and calcium reabsorption. This chain is Claudin-16, found in Rattus norvegicus (Rat).